Consider the following 293-residue polypeptide: DNA-directed RNA polymerase III subunit rpc6 (293 aa).

It belongs to the eukaryotic RPC34/RPC39 RNA polymerase subunit family. In terms of assembly, component of the RNA polymerase III (Pol III) complex.

Its subcellular location is the nucleus. Its function is as follows. DNA-dependent RNA polymerase catalyzes the transcription of DNA into RNA using the four ribonucleoside triphosphates as substrates. Specific peripheric component of RNA polymerase III which synthesizes small RNAs, such as 5S rRNA and tRNAs. May direct RNA Pol III binding to the TFIIIB-DNA complex. The polypeptide is DNA-directed RNA polymerase III subunit rpc6 (polr3f) (Dictyostelium discoideum (Social amoeba)).